The primary structure comprises 230 residues: MSEHKKLLKNGMWDNNPALVQLLGLCPLLAVSSTVTNALGLGIATLLVLVGSNVTVSLIRNYVPKEIRIPVFVMIIASLVTCVQLLMNAYAYGLYLSLGIFIPLIVTNCIIIGRAEAYASKNDPLPAALDGFWMGMGMTTVLVVLGAMREIIGNGTLFDGADLLLGEWASALRIQVFQFDSSFLLALLPPGAFIGVGLLIALKNVIDTQLKARQPKQEKPAIERARVTNA.

The next 5 membrane-spanning stretches (helical) occupy residues Leu39–Ile59, Ile69–Ala89, Gly93–Gly113, Leu125–Leu145, and Ser182–Leu202.

The protein belongs to the NqrDE/RnfAE family. In terms of assembly, the complex is composed of six subunits: RnfA, RnfB, RnfC, RnfD, RnfE and RnfG.

It is found in the cell inner membrane. Functionally, part of a membrane-bound complex that couples electron transfer with translocation of ions across the membrane. The protein is Ion-translocating oxidoreductase complex subunit E of Vibrio vulnificus (strain YJ016).